The sequence spans 280 residues: Lysosome-associated membrane glycoprotein 5 (280 aa).

An N-terminal signal peptide occupies residues 1–29; that stretch reads MDLRRRALLGVDGLRVLLMLFHTVTRIMA. Topologically, residues 30–235 are extracellular; the sequence is EQEVENLSGL…PVDEREQLEE (206 aa). N-linked (GlcNAc...) asparagine glycans are attached at residues Asn-35 and Asn-53. Residues 236 to 256 traverse the membrane as a helical segment; it reads TLPLILGLILGLVIVVTLVIY. Over 257-280 the chain is Cytoplasmic; the sequence is HIHHKMTANQVQIPRDRSQYKHMG.

It belongs to the LAMP family. Post-translationally, glycosylated.

It is found in the cytoplasmic vesicle membrane. It localises to the cell membrane. The protein localises to the cell projection. Its subcellular location is the dendrite. The protein resides in the cytoplasmic vesicle. It is found in the secretory vesicle. It localises to the synaptic vesicle membrane. The protein localises to the growth cone membrane. Its subcellular location is the early endosome membrane. The protein resides in the recycling endosome. It is found in the endoplasmic reticulum-Golgi intermediate compartment membrane. It localises to the endosome membrane. In terms of biological role, plays a role in short-term synaptic plasticity in a subset of GABAergic neurons in the brain. The sequence is that of Lysosome-associated membrane glycoprotein 5 (LAMP5) from Bos taurus (Bovine).